A 470-amino-acid chain; its full sequence is Siroheme synthase (470 aa).

A precorrin-2 dehydrogenase /sirohydrochlorin ferrochelatase region spans residues 1–213 (MSDATDPGWF…GEHAAARQVL (213 aa)). Residues 28–29 (GI) and 49–50 (PR) contribute to the NAD(+) site. The tract at residues 224 to 470 (GEVWLVGAGP…VVTPPPLSGT (247 aa)) is uroporphyrinogen-III C-methyltransferase. Pro233 lines the S-adenosyl-L-methionine pocket. Asp256 serves as the catalytic Proton acceptor. Lys278 (proton donor) is an active-site residue. S-adenosyl-L-methionine-binding positions include 309-311 (GGD), Ile314, 339-340 (TA), Met392, and Gly421.

This sequence in the N-terminal section; belongs to the precorrin-2 dehydrogenase / sirohydrochlorin ferrochelatase family. It in the C-terminal section; belongs to the precorrin methyltransferase family.

It catalyses the reaction uroporphyrinogen III + 2 S-adenosyl-L-methionine = precorrin-2 + 2 S-adenosyl-L-homocysteine + H(+). The catalysed reaction is precorrin-2 + NAD(+) = sirohydrochlorin + NADH + 2 H(+). It carries out the reaction siroheme + 2 H(+) = sirohydrochlorin + Fe(2+). Its pathway is cofactor biosynthesis; adenosylcobalamin biosynthesis; precorrin-2 from uroporphyrinogen III: step 1/1. It functions in the pathway cofactor biosynthesis; adenosylcobalamin biosynthesis; sirohydrochlorin from precorrin-2: step 1/1. The protein operates within porphyrin-containing compound metabolism; siroheme biosynthesis; precorrin-2 from uroporphyrinogen III: step 1/1. It participates in porphyrin-containing compound metabolism; siroheme biosynthesis; siroheme from sirohydrochlorin: step 1/1. Its pathway is porphyrin-containing compound metabolism; siroheme biosynthesis; sirohydrochlorin from precorrin-2: step 1/1. Its function is as follows. Multifunctional enzyme that catalyzes the SAM-dependent methylations of uroporphyrinogen III at position C-2 and C-7 to form precorrin-2 via precorrin-1. Then it catalyzes the NAD-dependent ring dehydrogenation of precorrin-2 to yield sirohydrochlorin. Finally, it catalyzes the ferrochelation of sirohydrochlorin to yield siroheme. This Gluconacetobacter diazotrophicus (strain ATCC 49037 / DSM 5601 / CCUG 37298 / CIP 103539 / LMG 7603 / PAl5) protein is Siroheme synthase.